Here is a 548-residue protein sequence, read N- to C-terminus: Probable sucrose-6-phosphate hydrolase (548 aa).

Substrate contacts are provided by residues Leu-105–Asp-108, Gln-124, Phe-167–Ser-168, Arg-228–Asp-229, and Glu-283. Asp-108 is an active-site residue.

The protein belongs to the glycosyl hydrolase 32 family.

The protein resides in the cytoplasm. The catalysed reaction is Hydrolysis of terminal non-reducing beta-D-fructofuranoside residues in beta-D-fructofuranosides.. It participates in glycan biosynthesis; sucrose metabolism. Its function is as follows. Enables the bacterium to metabolize sucrose as a sole carbon source. The polypeptide is Probable sucrose-6-phosphate hydrolase (Vibrio cholerae serotype O1 (strain ATCC 39315 / El Tor Inaba N16961)).